The sequence spans 162 residues: Protein FAM162B (162 aa).

Residues Glu-26–Pro-69 form a disordered region. A helical membrane pass occupies residues Val-107–Ser-127.

Belongs to the UPF0389 family.

The protein localises to the membrane. This is Protein FAM162B (FAM162B) from Homo sapiens (Human).